Consider the following 397-residue polypeptide: Argininosuccinate synthase (397 aa).

Residue 9–17 (AYSGGLDTS) participates in ATP binding. An L-citrulline-binding site is contributed by Tyr87. Gly117 contributes to the ATP binding site. L-aspartate-binding residues include Thr119, Asn123, and Asp124. Position 123 (Asn123) interacts with L-citrulline. Positions 127, 175, 184, 260, and 272 each coordinate L-citrulline.

It belongs to the argininosuccinate synthase family. Type 1 subfamily. As to quaternary structure, homotetramer.

It is found in the cytoplasm. The catalysed reaction is L-citrulline + L-aspartate + ATP = 2-(N(omega)-L-arginino)succinate + AMP + diphosphate + H(+). It functions in the pathway amino-acid biosynthesis; L-arginine biosynthesis; L-arginine from L-ornithine and carbamoyl phosphate: step 2/3. The sequence is that of Argininosuccinate synthase from Methanococcus maripaludis (strain DSM 14266 / JCM 13030 / NBRC 101832 / S2 / LL).